We begin with the raw amino-acid sequence, 132 residues long: MNPKKSIQLWELQSLLKGATYKKLIEKKTYEAGKERADNYDFLFMSFISFIVSCRLFILVFTFIFKGFPSAIQVIAMIDAVVNALLILIVLAMLFIGSRKLTVEIRRGEVEDFQENLKAREDTFNSSPYQRY.

2 consecutive transmembrane segments (helical) span residues Phe44–Ile64 and Ile75–Phe95.

Its subcellular location is the cytoplasm. It localises to the membrane. This is an uncharacterized protein from Schizosaccharomyces pombe (strain 972 / ATCC 24843) (Fission yeast).